We begin with the raw amino-acid sequence, 194 residues long: Imidazoleglycerol-phosphate dehydratase (194 aa).

The protein belongs to the imidazoleglycerol-phosphate dehydratase family.

The protein localises to the cytoplasm. It carries out the reaction D-erythro-1-(imidazol-4-yl)glycerol 3-phosphate = 3-(imidazol-4-yl)-2-oxopropyl phosphate + H2O. Its pathway is amino-acid biosynthesis; L-histidine biosynthesis; L-histidine from 5-phospho-alpha-D-ribose 1-diphosphate: step 6/9. This Bacillus licheniformis (strain ATCC 14580 / DSM 13 / JCM 2505 / CCUG 7422 / NBRC 12200 / NCIMB 9375 / NCTC 10341 / NRRL NRS-1264 / Gibson 46) protein is Imidazoleglycerol-phosphate dehydratase.